We begin with the raw amino-acid sequence, 541 residues long: MFSWMGRQAGGRERSGGMDAVQTVTGGLRSLYQRKVLPLEEAYRFHEFHSPALEDADFENKPMILLVGQYSTGKTTFIRYLLEQDFPGMRIGPEPTTDSFIAVMYGETEGSTPGNALVVDPKKPFRKLSRFGNAFLNRFMCSQLPNQVLKSISIIDSPGILSGEKQRISRGYDFCQVLQWFAERVDRIILLFDAHKLDISDEFSEAIKAFRGQDDKIRVVLNKADQVDTQQLMRVYGALMWSLGKVINTPEVLRVYIGSFWAQPLQNTDNRRLFEAEAQDLFRDIQSLPQKAAVRKLNDLIKRARLAKVHAYIISYLKKEMPNMFGKENKKRELIYRLPEIYVQLQREYQISAGDFPEVKAMQEQLENYDFTKFHSLKPKLIEAVDNMLTNKISSLMGLISQEEMNMPTQMVQGGAFDGTTEGPFNQGYGEGAKEGADEEEWVVAKDKPVYDELFYTLSPINGKISGVNAKKEMVTSKLPNSVLGKIWKLADCDCDGMLDEEEFALAKHLIKIKLDGYELPNSLPPHLVPPSHRKSLPKAD.

At Met1 the chain carries N-acetylmethionine. The interval 1–20 (MFSWMGRQAGGRERSGGMDA) is disordered. Ser15 is modified (phosphoserine). In terms of domain architecture, Dynamin-type G spans 58-289 (FENKPMILLV…DLFRDIQSLP (232 aa)). The tract at residues 68 to 75 (GQYSTGKT) is G1 motif. 68-75 (GQYSTGKT) contacts ATP. Positions 94 to 95 (EP) are G2 motif. A G3 motif region spans residues 156-159 (DSPG). At Ser162 the chain carries Phosphoserine. A G4 motif region spans residues 222–225 (NKAD). Residue Lys223 coordinates ATP. Position 246 (Val246) is a region of interest, G5 motif. Trp261 is a binding site for ATP. Positions 447-535 (DKPVYDELFY…PHLVPPSHRK (89 aa)) constitute an EH domain. Position 451 is a phosphotyrosine (Tyr451). Ser459 carries the phosphoserine modification. In terms of domain architecture, EF-hand spans 479–514 (LPNSVLGKIWKLADCDCDGMLDEEEFALAKHLIKIK). The Ca(2+) site is built by Asp492, Asp494, Asp496, Met498, and Glu503.

It belongs to the TRAFAC class dynamin-like GTPase superfamily. Dynamin/Fzo/YdjA family. EHD subfamily. In terms of assembly, homooligomer, and heterooligomer with EHD1, EHD2 and EHD3. Forms a complex with EHD4 and MICALL1; the complex controls CDH5 trafficking and coordinates angiogenesis.

It localises to the early endosome membrane. The protein resides in the recycling endosome membrane. It is found in the cell membrane. Its subcellular location is the cell junction. The protein localises to the adherens junction. Functionally, ATP- and membrane-binding protein that probably controls membrane reorganization/tubulation upon ATP hydrolysis. Plays a role in early endosomal transport. During sprouting angiogenesis, in complex with PACSIN2 and MICALL1, forms recycling endosome-like tubular structure at asymmetric adherens junctions to control CDH5 trafficking. The sequence is that of EH domain-containing protein 4 from Mus musculus (Mouse).